A 702-amino-acid chain; its full sequence is Translation factor GUF1 homolog, chloroplastic (702 aa).

The span at 1–30 (MASAAPASRGAARASTAARDAPFAAAARGP) shows a compositional bias: low complexity. The segment at 1 to 41 (MASAAPASRGAARASTAARDAPFAAAARGPGRFRRDGNGRN) is disordered. Positions 87–283 (SQIRNFSIIA…NIVKMIPPPP (197 aa)) constitute a tr-type G domain. GTP is bound by residues 96 to 103 (AHIDHGKS), 162 to 166 (DTPGH), and 216 to 219 (NKID).

It belongs to the TRAFAC class translation factor GTPase superfamily. Classic translation factor GTPase family. LepA subfamily.

It is found in the plastid. The protein localises to the chloroplast. The enzyme catalyses GTP + H2O = GDP + phosphate + H(+). In terms of biological role, promotes chloroplast protein synthesis. May act as a fidelity factor of the translation reaction, by catalyzing a one-codon backward translocation of tRNAs on improperly translocated ribosomes. This is Translation factor GUF1 homolog, chloroplastic from Micromonas pusilla (strain CCMP1545) (Picoplanktonic green alga).